Consider the following 148-residue polypeptide: Early glycoprotein GP48 (148 aa).

The first 21 residues, 1-21 (MMLRAWRLMVLLAAYCYYVFA), serve as a signal peptide directing secretion. N-linked (GlcNAc...) asparagine; by host glycans are attached at residues asparagine 22, asparagine 44, asparagine 49, asparagine 57, asparagine 65, asparagine 104, asparagine 108, asparagine 118, asparagine 135, and asparagine 144.

The protein belongs to the RL11 family. In terms of processing, N-glycosylated and possibly O-glycosylated.

The protein resides in the virion membrane. This chain is Early glycoprotein GP48 (UL4), found in Homo sapiens (Human).